The chain runs to 1353 residues: Tenascin-R (1353 aa).

The N-terminal stretch at 1–33 is a signal peptide; that stretch reads MGTDSENPVLRNVLISFNLLLLGAVLKPFECRL. The stretch at 132–156 forms a coiled coil; sequence SLQELLSRIEMLEREVSMLRDQCNS. 2 N-linked (GlcNAc...) asparagine glycosylation sites follow: Asn-179 and Asn-197. 4 consecutive EGF-like domains span residues 187-198, 234-260, 265-291, and 292-323; these read CICSEGWAGSNC, CPAG…GEDC, CPRD…GEDC, and GWLR…QDCS. Asn-277 carries N-linked (GlcNAc...) asparagine glycosylation. Disulfide bonds link Cys-296–Cys-306 and Cys-313–Cys-322. 9 Fibronectin type-III domains span residues 327–419, 420–504, 505–594, 595–686, 687–776, 777–863, 864–952, 953–1037, and 1038–1126; these read PPEN…TPQG, LKFK…TLID, GPTQ…TEID, APKN…TELD, SPRD…VRPI, TQLH…TGMD, APKD…AMDA, PLGV…TLLD, and PPTN…GGRV. N-linked (GlcNAc...) asparagine glycans are attached at residues Asn-391, Asn-469, and Asn-580. N-linked (GlcNAc...) asparagine glycans are attached at residues Asn-734, Asn-790, Asn-872, Asn-1031, Asn-1041, Asn-1256, and Asn-1342. One can recognise a Fibrinogen C-terminal domain in the interval 1124 to 1339; that stretch reads GRVFANPQDC…FVEMKMRPYN (216 aa).

This sequence belongs to the tenascin family. As to quaternary structure, forms homodimers and homotrimers. Interacts with CNTN1, NFASC and CSPG5. In terms of tissue distribution, brain specific.

The protein resides in the secreted. The protein localises to the extracellular space. It is found in the extracellular matrix. Its function is as follows. Neural extracellular matrix (ECM) protein involved in interactions with different cells and matrix components. Involved in cell attachment and neurite formation. Interaction with CNTN1 enhances the neurite outgrowth. This is Tenascin-R (TNR) from Gallus gallus (Chicken).